Consider the following 540-residue polypeptide: Chaperonin GroEL (540 aa).

Residues 29–32 (TLGP), 86–90 (DGTTT), G413, 476–478 (NAA), and D492 contribute to the ATP site.

This sequence belongs to the chaperonin (HSP60) family. As to quaternary structure, forms a cylinder of 14 subunits composed of two heptameric rings stacked back-to-back. Interacts with the co-chaperonin GroES.

It localises to the cytoplasm. The catalysed reaction is ATP + H2O + a folded polypeptide = ADP + phosphate + an unfolded polypeptide.. Functionally, together with its co-chaperonin GroES, plays an essential role in assisting protein folding. The GroEL-GroES system forms a nano-cage that allows encapsulation of the non-native substrate proteins and provides a physical environment optimized to promote and accelerate protein folding. The chain is Chaperonin GroEL from Streptococcus anginosus.